A 490-amino-acid chain; its full sequence is MKYSVKQTALEQENKSLFIAIFENQELSPAALKLDLKLKGEITEAVKNGEVSGKIGRILVLRHGAQRIILVGCGKQNEVTERQYKQIIQKAVKTAKETIATTIINALTEVKIKDRDLYWNVRFAVETIEEDNYIFEQFKSKKSENNSKLAEIIFYTEENHEQAELAIRHATAISSGVKAAKDIANCPPNICNPAYLAEQANQLAGRSSLIETTVIGEKEMRKLGMNAYLAVSCGSKNEAKLSVMEYRNHENPNAKPIVLAGKGLTFDAGGISLKPAADMDEMKYDMCGAASVYGVMNAIAELQLPLNVIGVMAGCENLPDGNAYRPGDILTTMSGLTVEVLNTDAEGRLVLCDTLTYVERFEPELVIDVATLTGACVVALGQHNSGLVSTDDNLAQDLERAAKLANDKAWRLPLSEEYQEQLKSKFADLANLGGRWGGAITAGAFLSNFTKNYPWAHLDIAGTAWLQGQNKGATGRPVSLLVQFLLNQVK.

Mn(2+)-binding residues include Lys-262 and Asp-267. Lys-274 is an active-site residue. Residues Asp-285, Asp-344, and Glu-346 each coordinate Mn(2+). Residue Arg-348 is part of the active site.

It belongs to the peptidase M17 family. Mn(2+) serves as cofactor.

Its subcellular location is the cytoplasm. The catalysed reaction is Release of an N-terminal amino acid, Xaa-|-Yaa-, in which Xaa is preferably Leu, but may be other amino acids including Pro although not Arg or Lys, and Yaa may be Pro. Amino acid amides and methyl esters are also readily hydrolyzed, but rates on arylamides are exceedingly low.. It catalyses the reaction Release of an N-terminal amino acid, preferentially leucine, but not glutamic or aspartic acids.. Presumably involved in the processing and regular turnover of intracellular proteins. Catalyzes the removal of unsubstituted N-terminal amino acids from various peptides. This Mannheimia succiniciproducens (strain KCTC 0769BP / MBEL55E) protein is Probable cytosol aminopeptidase.